A 944-amino-acid chain; its full sequence is Isoleucine--tRNA ligase (944 aa).

The 'HIGH' region signature appears at 58 to 68 (PYANGSIHIGH). Glu563 serves as a coordination point for L-isoleucyl-5'-AMP. Residues 604-608 (KMSKS) carry the 'KMSKS' region motif. Residue Lys607 coordinates ATP. Residues Cys907, Cys910, Cys927, and Cys930 each contribute to the Zn(2+) site.

The protein belongs to the class-I aminoacyl-tRNA synthetase family. IleS type 1 subfamily. In terms of assembly, monomer. It depends on Zn(2+) as a cofactor.

The protein localises to the cytoplasm. It catalyses the reaction tRNA(Ile) + L-isoleucine + ATP = L-isoleucyl-tRNA(Ile) + AMP + diphosphate. In terms of biological role, catalyzes the attachment of isoleucine to tRNA(Ile). As IleRS can inadvertently accommodate and process structurally similar amino acids such as valine, to avoid such errors it has two additional distinct tRNA(Ile)-dependent editing activities. One activity is designated as 'pretransfer' editing and involves the hydrolysis of activated Val-AMP. The other activity is designated 'posttransfer' editing and involves deacylation of mischarged Val-tRNA(Ile). This is Isoleucine--tRNA ligase from Salmonella typhi.